Consider the following 446-residue polypeptide: Ribosome biogenesis protein WDR12 homolog (446 aa).

Positions 21–105 (VQITFFSKDK…ETILKIECII (85 aa)) are ubiquitin-like (UBL) domain. 2 WD repeats span residues 171–211 (KCSG…LVEK) and 216–255 (GHER…EATI). Residues 256–275 (YEKEEEESSAKKKRKKDTRT) are disordered. WD repeat units lie at residues 284–324 (GHRD…EVSR), 326–365 (KGPK…GAMV), 371–412 (GHQN…SSLF), and 416–446 (GHED…FETS).

It belongs to the WD repeat WDR12/YTM1 family.

The protein localises to the nucleus. Its subcellular location is the nucleolus. It is found in the nucleoplasm. In terms of biological role, required for maturation of ribosomal RNAs and formation of the large ribosomal subunit. The sequence is that of Ribosome biogenesis protein WDR12 homolog from Caenorhabditis briggsae.